A 415-amino-acid polypeptide reads, in one-letter code: 6-phospho-beta-glucosidase BglT (415 aa).

Position 1–64 (1–64) interacts with NAD(+); the sequence is MRIAVIGGGS…DRFKVLISDT (64 aa). Residues Arg87 and Asn140 each coordinate substrate. Position 162 (Cys162) interacts with Mn(2+). Residue Asn163 participates in substrate binding. His192 provides a ligand contact to Mn(2+). The active-site Proton acceptor is the Tyr241. Position 261 (Arg261) interacts with substrate.

It belongs to the glycosyl hydrolase 4 family. Homodimer or homotetramer. Exists in a homodimer/homotetramer equilibrium state in solution. It depends on NAD(+) as a cofactor. Mn(2+) is required as a cofactor.

It catalyses the reaction 6-phospho-beta-D-glucosyl-(1-&gt;4)-D-glucose + H2O = D-glucose 6-phosphate + D-glucose. Hydrolyzes cellobiose 6'-phosphate into glucose 6-phosphate (Glc6P) and glucose. The chain is 6-phospho-beta-glucosidase BglT (bglT) from Thermotoga maritima (strain ATCC 43589 / DSM 3109 / JCM 10099 / NBRC 100826 / MSB8).